The sequence spans 402 residues: Rubredoxin-oxygen oxidoreductase (402 aa).

The interval 30–216 is zinc metallo-hydrolase; that stretch reads PMGTTYNAYL…KAIETLVGAG (187 aa). Residues histidine 79, glutamate 81, aspartate 83, histidine 146, aspartate 165, and histidine 226 each coordinate Fe cation. Residues 255–393 enclose the Flavodoxin-like domain; that stretch reads VVIFYDSMWH…QLKTMAQTIA (139 aa).

This sequence in the N-terminal section; belongs to the zinc metallo-hydrolase group 3 family. Homodimer. The cofactor is FMN. Requires Fe cation as cofactor.

The protein operates within energy metabolism; electron transfer. Catalyzes the four-electron reduction of one oxygen molecule to two water molecules. In Megalodesulfovibrio gigas (strain ATCC 19364 / DSM 1382 / NCIMB 9332 / VKM B-1759) (Desulfovibrio gigas), this protein is Rubredoxin-oxygen oxidoreductase (roo).